Reading from the N-terminus, the 239-residue chain is MTVEAFISALNDAGITLTEQQIEQFQRYFELLVEANKQFNLTAITDEKDVYLKHFYDSLTVAIYVKALQHQSSTLIDVGTGAGFPSLPLKIAFPQLKITMVDALQKRVRFLQDVVDTLDLKNVSIVHGRAEDIGQNVAYREQFDFATARALARTSVLAEYTLPFVKVGGALLVMKGAAAEQELADGQQALATLGGTLSSAFDFKLPNGDQRVIQVVDKHKKTPKKYPRQAGTPNKKPIA.

S-adenosyl-L-methionine is bound by residues Gly-79, Phe-84, 130 to 131 (AE), and Arg-149. Residues 218–227 (KHKKTPKKYP) show a composition bias toward basic residues. The interval 218-239 (KHKKTPKKYPRQAGTPNKKPIA) is disordered.

Belongs to the methyltransferase superfamily. RNA methyltransferase RsmG family.

The protein resides in the cytoplasm. Its function is as follows. Specifically methylates the N7 position of a guanine in 16S rRNA. The chain is Ribosomal RNA small subunit methyltransferase G from Leuconostoc citreum (strain KM20).